Consider the following 160-residue polypeptide: Protein-export protein SecB (160 aa).

Belongs to the SecB family. In terms of assembly, homotetramer, a dimer of dimers. One homotetramer interacts with 1 SecA dimer.

Its subcellular location is the cytoplasm. In terms of biological role, one of the proteins required for the normal export of preproteins out of the cell cytoplasm. It is a molecular chaperone that binds to a subset of precursor proteins, maintaining them in a translocation-competent state. It also specifically binds to its receptor SecA. The protein is Protein-export protein SecB of Rhodospirillum rubrum (strain ATCC 11170 / ATH 1.1.1 / DSM 467 / LMG 4362 / NCIMB 8255 / S1).